We begin with the raw amino-acid sequence, 1012 residues long: Putative cellulose synthase-like protein D5 (1012 aa).

Positions Met-1–Val-85 are disordered. Over residues Pro-20 to Gly-37 the composition is skewed to low complexity. Basic and acidic residues predominate over residues Gly-57–Leu-69. 2 helical membrane passes run Ile-150–Val-170 and Ala-180–Leu-200. Asp-280 is an active-site residue. Residues Pro-597–Asp-620 form a disordered region. Gly residues predominate over residues Gly-606–Gly-618. Asp-717 is a catalytic residue. 6 consecutive transmembrane segments (helical) span residues Leu-799–Val-819, Thr-825–Val-845, Leu-871–Leu-891, Ser-914–Val-934, Leu-948–Gly-968, and Thr-978–Ile-998.

Belongs to the glycosyltransferase 2 family. Plant cellulose synthase-like D subfamily.

It is found in the golgi apparatus membrane. Its function is as follows. Thought to be a Golgi-localized beta-glycan synthase that polymerize the backbones of noncellulosic polysaccharides (hemicelluloses) of plant cell wall. The chain is Putative cellulose synthase-like protein D5 (CSLD5) from Oryza sativa subsp. indica (Rice).